A 453-amino-acid chain; its full sequence is DNA repair protein RadA (453 aa).

The segment at 10-27 (CQECGYQSPKYLGRCPNC) adopts a C4-type zinc-finger fold. 95–102 (GDPGIGKS) contributes to the ATP binding site. The RadA KNRFG motif motif lies at 251 to 255 (KNRFG). The segment at 350–453 (DAYLKSAGGV…VGQVLKAVFS (104 aa)) is lon-protease-like.

It belongs to the RecA family. RadA subfamily.

Its function is as follows. DNA-dependent ATPase involved in processing of recombination intermediates, plays a role in repairing DNA breaks. Stimulates the branch migration of RecA-mediated strand transfer reactions, allowing the 3' invading strand to extend heteroduplex DNA faster. Binds ssDNA in the presence of ADP but not other nucleotides, has ATPase activity that is stimulated by ssDNA and various branched DNA structures, but inhibited by SSB. Does not have RecA's homology-searching function. This is DNA repair protein RadA from Streptococcus pyogenes serotype M6 (strain ATCC BAA-946 / MGAS10394).